A 338-amino-acid polypeptide reads, in one-letter code: tRNA N6-adenosine threonylcarbamoyltransferase (338 aa).

Fe cation contacts are provided by H111 and H115. Substrate is bound by residues 134 to 138, D167, G180, and N275; that span reads LLSGG. D304 provides a ligand contact to Fe cation.

It belongs to the KAE1 / TsaD family. Fe(2+) is required as a cofactor.

It localises to the cytoplasm. The enzyme catalyses L-threonylcarbamoyladenylate + adenosine(37) in tRNA = N(6)-L-threonylcarbamoyladenosine(37) in tRNA + AMP + H(+). Required for the formation of a threonylcarbamoyl group on adenosine at position 37 (t(6)A37) in tRNAs that read codons beginning with adenine. Is involved in the transfer of the threonylcarbamoyl moiety of threonylcarbamoyl-AMP (TC-AMP) to the N6 group of A37, together with TsaE and TsaB. TsaD likely plays a direct catalytic role in this reaction. This Leptospira interrogans serogroup Icterohaemorrhagiae serovar copenhageni (strain Fiocruz L1-130) protein is tRNA N6-adenosine threonylcarbamoyltransferase.